The chain runs to 392 residues: Probable Ni/Fe-hydrogenase 2 b-type cytochrome subunit (392 aa).

The Periplasmic portion of the chain corresponds to 1 to 11 (MSHDPQPLGGK). The helical transmembrane segment at 12–32 (IISKPVMIFGPLIVICMLLIV) threads the bilayer. The Cytoplasmic segment spans residues 33 to 34 (KR). The helical transmembrane segment at 35–55 (LVFGLGSVSDLNGGFPWGVWI) threads the bilayer. Topologically, residues 56–58 (AFD) are periplasmic. The helical transmembrane segment at 59 to 79 (LLIGTGFACGGWALAWAVYVF) threads the bilayer. The Cytoplasmic portion of the chain corresponds to 80–90 (NRGQYHPLVRP). Residues 91-111 (ALLASLFGYSLGGLSITIDVG) traverse the membrane as a helical segment. Over 112 to 133 (RYWNLPYFYIPGHFNVNSVLFE) the chain is Periplasmic. A helical membrane pass occupies residues 134–154 (TAVCMTIYIGVMALEFAPALF). The Cytoplasmic segment spans residues 155-168 (ERLGWKVSLQRLNK). Residues 169-189 (VMFFIIALGALLPTMHQSSMG) form a helical membrane-spanning segment. Over 190–207 (SLMISAGYKVHPLWQSYE) the chain is Periplasmic. Residues 208–228 (MLPLFSLLTAFIMGFSIVIFE) traverse the membrane as a helical segment. Residues 229 to 249 (GSLVQAGLRGNGPDEKSLFVK) lie on the Cytoplasmic side of the membrane. The chain crosses the membrane as a helical span at residues 250–270 (LTNTISVLLAIFIVLRFGELI). Residues 271–281 (YRDKLSLAFAG) are Periplasmic-facing. A helical membrane pass occupies residues 282–302 (DFYSVMFWIEVLLMLFPLVVL). Topologically, residues 303-333 (RVAKLRNDSRMLFLSALSALLGCATWRLTYS) are cytoplasmic. Residues 334–354 (LVAFNPGGGYAYFPTWEELLI) form a helical membrane-spanning segment. Ser-355 is a topological domain (periplasmic). The chain crosses the membrane as a helical span at residues 356–376 (IGFVAIEICAYIVLIRLLPIL). At 377-392 (PPLKQNDHNRHEASKA) the chain is on the cytoplasmic side.

The protein belongs to the NrfD family.

It is found in the cell inner membrane. Probable b-type cytochrome. The polypeptide is Probable Ni/Fe-hydrogenase 2 b-type cytochrome subunit (hybB) (Escherichia coli (strain K12)).